Reading from the N-terminus, the 390-residue chain is MADTRELPVFAYIDDVKQLQELRQYLNKHDSVKLDPNGPSETAQNMIEICSTLNVLPSWSQDVDLVLNSISSLIVVVPGEKCEPVVDSFIKNVAPQFYKGTGWASHAGIAVRVLSNLYKGYSNFHTVQEKIFKALVDMCAEARLIGELECNLETLQDRFNTWKTPVEGQREILRAVHRALLVDQRVDQAAKVMTALLGTYTEKDAAAARDDAMECVRTAVVDPKSFSFDHLERLSAVKALKTSDPLMFTALELFISGTLKDYKEFVAKNPKFVTEHLKVDETILLKKIRLLTLMSLAEEKNEISLDELAKQLDILADETLEEFVIDAIQVNAISGKINEMARTLIVSSYQHRRFGTEQWVLLEKRLKVLIANLKQTHNNVHEVNQRIEAL.

Residues 188–351 (QAAKVMTALL…RTLIVSSYQH (164 aa)) form the PCI domain.

Belongs to the eIF-3 subunit M family. As to quaternary structure, component of the eukaryotic translation initiation factor 3 (eIF-3) complex. Within the eIF-3 complex, interacts directly with eif-3.F. Component of the CSN complex, composed of csn-1, csn-2, csn-3, csn-4, csn-5, csn-6 and csn-7. Within the CSN complex, interacts directly with csn-1 and csn-4.

The protein resides in the cytoplasm. Functionally, component of the eukaryotic translation initiation factor 3 (eIF-3) complex, which is involved in protein synthesis of a specialized repertoire of mRNAs and, together with other initiation factors, stimulates binding of mRNA and methionyl-tRNAi to the 40S ribosome. The eIF-3 complex specifically targets and initiates translation of a subset of mRNAs involved in cell proliferation (Potential). Component of the COP9 signalosome complex (CSN), a complex involved in various cellular and developmental processes. The CSN complex is an essential regulator of the ubiquitin (Ubl) conjugation pathway by mediating the deneddylation of the cullin subunits of the SCF-type E3 ligase complexes, leading to decrease the Ubl ligase activity of SCF. The CSN complex plays an essential role in embryogenesis and oogenesis and is required to regulate microtubule stability in the early embryo. Mediates mei-1 targeting for degradation at the meiosis to mitosis transition via deneddylation of cul-3. The polypeptide is COP9/Signalosome and eIF3 complex-shared subunit 1 (Caenorhabditis elegans).